A 113-amino-acid polypeptide reads, in one-letter code: Beta-defensin 112 (113 aa).

3 disulfides stabilise this stretch: Cys54–Cys82, Cys61–Cys75, and Cys65–Cys83.

Belongs to the beta-defensin family.

The protein localises to the secreted. Has antibacterial activity. This is Beta-defensin 112 (DEFB112) from Homo sapiens (Human).